The primary structure comprises 39 residues: Gas vesicle protein C (39 aa).

The protein belongs to the gas vesicle GvpC family.

It localises to the gas vesicle. Functionally, confers stability, involved in shaping gas vesicles, hollow, gas filled proteinaceous nanostructures. During planktonic growth they allow positioning of the organism at a favorable depth for light or nutrient acquisition. This is Gas vesicle protein C from Spirulina sp. (strain CCAP 1475/10).